A 146-amino-acid polypeptide reads, in one-letter code: Bacterial hemoglobin (146 aa).

In terms of domain architecture, Globin spans 1–138; sequence MLDQQTINII…IADVFIQVEA (138 aa). 2 residues coordinate heme b: Gln53 and His85.

The protein belongs to the globin family. In terms of assembly, homodimer.

This protein functions as a terminal oxidase. This is Bacterial hemoglobin (vhb) from Vitreoscilla stercoraria.